Reading from the N-terminus, the 437-residue chain is Probable inactive DNA (cytosine-5)-methyltransferase DRM1B (437 aa).

UBA domains follow at residues 20 to 60 (SAPS…LLQL) and 120 to 164 (EMSE…IYAP). In terms of domain architecture, SAM-dependent MTase DRM-type spans 243 to 437 (VHRNLPDHAL…LIQLHTTSLC (195 aa)).

It belongs to the class I-like SAM-binding methyltransferase superfamily. DRM-methyltransferase family.

Its subcellular location is the nucleus. In terms of biological role, involved in de novo DNA methylation. Involved in RNA-directed DNA methylation (RdDM). This chain is Probable inactive DNA (cytosine-5)-methyltransferase DRM1B, found in Oryza sativa subsp. japonica (Rice).